A 158-amino-acid chain; its full sequence is NAD(P)H-quinone oxidoreductase subunit J, chloroplastic (158 aa).

It belongs to the complex I 30 kDa subunit family. NDH is composed of at least 16 different subunits, 5 of which are encoded in the nucleus.

It localises to the plastid. The protein resides in the chloroplast thylakoid membrane. It carries out the reaction a plastoquinone + NADH + (n+1) H(+)(in) = a plastoquinol + NAD(+) + n H(+)(out). The enzyme catalyses a plastoquinone + NADPH + (n+1) H(+)(in) = a plastoquinol + NADP(+) + n H(+)(out). Functionally, NDH shuttles electrons from NAD(P)H:plastoquinone, via FMN and iron-sulfur (Fe-S) centers, to quinones in the photosynthetic chain and possibly in a chloroplast respiratory chain. The immediate electron acceptor for the enzyme in this species is believed to be plastoquinone. Couples the redox reaction to proton translocation, and thus conserves the redox energy in a proton gradient. The polypeptide is NAD(P)H-quinone oxidoreductase subunit J, chloroplastic (Nymphaea alba (White water-lily)).